The following is an 89-amino-acid chain: LYR motif-containing protein 4 (89 aa).

This sequence belongs to the complex I LYR family.

Its subcellular location is the mitochondrion. The protein resides in the nucleus. Its pathway is cofactor biosynthesis; iron-sulfur cluster biosynthesis. Required for nuclear and mitochondrial iron-sulfur protein biosynthesis. In Xenopus laevis (African clawed frog), this protein is LYR motif-containing protein 4 (lyrm4).